The following is a 130-amino-acid chain: UPF0102 protein AHA_3896 (130 aa).

This sequence belongs to the UPF0102 family.

This is UPF0102 protein AHA_3896 from Aeromonas hydrophila subsp. hydrophila (strain ATCC 7966 / DSM 30187 / BCRC 13018 / CCUG 14551 / JCM 1027 / KCTC 2358 / NCIMB 9240 / NCTC 8049).